A 106-amino-acid polypeptide reads, in one-letter code: Urease subunit beta (106 aa).

This sequence belongs to the urease beta subunit family. Heterotrimer of UreA (gamma), UreB (beta) and UreC (alpha) subunits. Three heterotrimers associate to form the active enzyme.

It is found in the cytoplasm. The enzyme catalyses urea + 2 H2O + H(+) = hydrogencarbonate + 2 NH4(+). The protein operates within nitrogen metabolism; urea degradation; CO(2) and NH(3) from urea (urease route): step 1/1. The polypeptide is Urease subunit beta (Synechococcus sp. (strain WH7805)).